Consider the following 321-residue polypeptide: NADPH-dependent D-xylose reductase (321 aa).

The Proton donor role is filled by Y50. H112 contacts substrate. NADP(+) contacts are provided by residues 167–168 (SN), 216–225 (SSFGPQSFVE), and 272–282 (KSNKKERLLGN).

This sequence belongs to the aldo/keto reductase family.

The catalysed reaction is xylitol + NAD(+) = D-xylose + NADH + H(+). It carries out the reaction xylitol + NADP(+) = D-xylose + NADPH + H(+). Its pathway is carbohydrate metabolism; D-xylose degradation. In terms of biological role, reduces D-xylose into xylitol. Preferentially utilizes NADPH as a cosubstrate. This Candida boidinii (Yeast) protein is NADPH-dependent D-xylose reductase (XYL1).